The sequence spans 59 residues: Protein translocase subunit SecE (59 aa).

A helical transmembrane segment spans residues 30–50; the sequence is ITVISTVIFFVIFFALLDTGI.

This sequence belongs to the SecE/SEC61-gamma family. In terms of assembly, component of the Sec protein translocase complex. Heterotrimer consisting of SecY, SecE and SecG subunits. The heterotrimers can form oligomers, although 1 heterotrimer is thought to be able to translocate proteins. Interacts with the ribosome. Interacts with SecDF, and other proteins may be involved. Interacts with SecA.

It is found in the cell membrane. In terms of biological role, essential subunit of the Sec protein translocation channel SecYEG. Clamps together the 2 halves of SecY. May contact the channel plug during translocation. This chain is Protein translocase subunit SecE, found in Bacillus subtilis (strain 168).